Reading from the N-terminus, the 179-residue chain is Large ribosomal subunit protein uL5 (179 aa).

The protein belongs to the universal ribosomal protein uL5 family. In terms of assembly, part of the 50S ribosomal subunit; part of the 5S rRNA/L5/L18/L25 subcomplex. Contacts the 5S rRNA and the P site tRNA. Forms a bridge to the 30S subunit in the 70S ribosome.

Its function is as follows. This is one of the proteins that bind and probably mediate the attachment of the 5S RNA into the large ribosomal subunit, where it forms part of the central protuberance. In the 70S ribosome it contacts protein S13 of the 30S subunit (bridge B1b), connecting the 2 subunits; this bridge is implicated in subunit movement. Contacts the P site tRNA; the 5S rRNA and some of its associated proteins might help stabilize positioning of ribosome-bound tRNAs. The sequence is that of Large ribosomal subunit protein uL5 from Neisseria meningitidis serogroup A / serotype 4A (strain DSM 15465 / Z2491).